An 82-amino-acid polypeptide reads, in one-letter code: Small ribosomal subunit protein bS16 (82 aa).

Belongs to the bacterial ribosomal protein bS16 family.

In Aliivibrio fischeri (strain ATCC 700601 / ES114) (Vibrio fischeri), this protein is Small ribosomal subunit protein bS16.